A 259-amino-acid chain; its full sequence is Hydroxyethylthiazole kinase (259 aa).

Methionine 50 lines the substrate pocket. ATP-binding residues include arginine 122 and threonine 168. Position 195 (glycine 195) interacts with substrate.

The protein belongs to the Thz kinase family. Mg(2+) serves as cofactor.

The enzyme catalyses 5-(2-hydroxyethyl)-4-methylthiazole + ATP = 4-methyl-5-(2-phosphooxyethyl)-thiazole + ADP + H(+). The protein operates within cofactor biosynthesis; thiamine diphosphate biosynthesis; 4-methyl-5-(2-phosphoethyl)-thiazole from 5-(2-hydroxyethyl)-4-methylthiazole: step 1/1. In terms of biological role, catalyzes the phosphorylation of the hydroxyl group of 4-methyl-5-beta-hydroxyethylthiazole (THZ). This is Hydroxyethylthiazole kinase from Escherichia coli O127:H6 (strain E2348/69 / EPEC).